The following is a 229-amino-acid chain: Demethylmenaquinone methyltransferase (229 aa).

S-adenosyl-L-methionine contacts are provided by residues Thr57, Asp77, and 101 to 102 (DV).

Belongs to the class I-like SAM-binding methyltransferase superfamily. MenG/UbiE family.

The enzyme catalyses a 2-demethylmenaquinol + S-adenosyl-L-methionine = a menaquinol + S-adenosyl-L-homocysteine + H(+). Its pathway is quinol/quinone metabolism; menaquinone biosynthesis; menaquinol from 1,4-dihydroxy-2-naphthoate: step 2/2. Functionally, methyltransferase required for the conversion of demethylmenaquinol (DMKH2) to menaquinol (MKH2). This Chlamydia trachomatis serovar L2 (strain ATCC VR-902B / DSM 19102 / 434/Bu) protein is Demethylmenaquinone methyltransferase.